The chain runs to 99 residues: UPF0235 protein Neut_2146 (99 aa).

It belongs to the UPF0235 family.

The chain is UPF0235 protein Neut_2146 from Nitrosomonas eutropha (strain DSM 101675 / C91 / Nm57).